A 483-amino-acid polypeptide reads, in one-letter code: MIQVLLVTLCLAAFPYQGNSIILESGNVNDYEVLYPQKVTALPKGAVQPKYEDTMQYEFKVNGEPVVLHLEKNKGLFSKDYSETHYSSDGRKITTNPPVEDHCYYHGRIQNDADSTASISACNGLKGHFKLQGETYLIEPLKLSDSEAHAVYKYENVEKGDEAPKMCGVTQTNWKSDKPIKKASQLNLTPEQQRFPQRYIELVVVADHRMFTKYNGNLNTIRIWVHELVNTMNVFYRPLNIHVSLTDLEVWSDQDLINVQPAAADTLEAFGDWRETVLLNRISHDNAQLLTAIELDGETIGLANRGTMCDPKLSTGIVQDHSAINLWVAVTMAHEMGHNLGISHDGNQCHCDANSCIMSEELRQQLSFEFSDCSQNQYQTFLTDHNPQCMLNEPLRTDIVSTPVSGNELWETGEESDFDAPANPCCDAETCKLRPGAQCAEGLCCDQCKFMKEGTVCHRAKGDDLDDYCNGISAGCPRNPFHA.

A signal peptide spans 1 to 20 (MIQVLLVTLCLAAFPYQGNS). Residues 21-191 (IILESGNVND…KASQLNLTPE (171 aa)) constitute a propeptide that is removed on maturation. Residues 198 to 394 (RYIELVVVAD…HNPQCMLNEP (197 aa)) enclose the Peptidase M12B domain. The Ca(2+) site is built by Glu-201 and Asp-285. Intrachain disulfides connect Cys-309/Cys-389, Cys-349/Cys-373, and Cys-351/Cys-356. His-334 contributes to the Zn(2+) binding site. Glu-335 is a catalytic residue. His-338 and His-344 together coordinate Zn(2+). The Ca(2+) site is built by Cys-389 and Asn-392. Positions 395–414 (LRTDIVSTPVSGNELWETGE) are excised as a propeptide. The region spanning 402–483 (TPVSGNELWE…AGCPRNPFHA (82 aa)) is the Disintegrin domain. Intrachain disulfides connect Cys-425/Cys-448, Cys-439/Cys-445, Cys-444/Cys-469, and Cys-457/Cys-476. A Cell attachment site; atypical (KGD) motif is present at residues 461-463 (KGD).

Belongs to the venom metalloproteinase (M12B) family. P-II subfamily. P-IIe sub-subfamily. Heterodimer; disulfide-linked (disintegrin). The cofactor is Zn(2+). As to expression, expressed by the venom gland.

Its subcellular location is the secreted. With respect to regulation, inhibited by EDTA and 1,10-phenanthroline, but not by PMSF. Functionally, has fibrinolytic activity. The recombinant enzyme cleaves both alpha- (FGA) and beta-chains (FGB) of fibrinogen, but not the gamma-chain. The recombinant protein does not produce hemorrhage in mice and does not have effect on ADP- or collagen-stimulated platelet aggregation. Inhibits platelet aggregation induced by ADP, thrombin, platelet-activating factor and collagen. Acts by inhibiting fibrinogen interaction with platelet receptors GPIIb/GPIIIa (ITGA2B/ITGB3). This chain is Zinc metalloproteinase/disintegrin VMP-II, found in Agkistrodon piscivorus leucostoma (Western cottonmouth).